The chain runs to 644 residues: Macrolide export ATP-binding/permease protein MacB (644 aa).

Positions 4–242 (IECKNINRYF…SNVGRIQEKA (239 aa)) constitute an ABC transporter domain. 40–47 (GQSGSGKS) is an ATP binding site. 4 helical membrane-spanning segments follow: residues 270-290 (LLTMLGIIIGIASVVSVVALG), 524-544 (IALISLVVGGIGVMNIMLVSV), 574-594 (LICVIGGLVGVGLSAAVSLVF), and 607-627 (AMSVIGAVACSTGIGIAFGFM).

Belongs to the ABC transporter superfamily. Macrolide exporter (TC 3.A.1.122) family. As to quaternary structure, homodimer.

Its subcellular location is the cell inner membrane. In terms of biological role, non-canonical ABC transporter that contains transmembrane domains (TMD), which form a pore in the inner membrane, and an ATP-binding domain (NBD), which is responsible for energy generation. Confers resistance against macrolides. The protein is Macrolide export ATP-binding/permease protein MacB of Neisseria meningitidis serogroup A / serotype 4A (strain DSM 15465 / Z2491).